A 148-amino-acid chain; its full sequence is Lipoprotein MlpA (148 aa).

The N-terminal stretch at Met1 to Ser17 is a signal peptide. Cys18 is lipidated: N-palmitoyl cysteine. A lipid anchor (S-diacylglycerol cysteine) is attached at Cys18. Residues Leu26 to Leu58 form a disordered region. Basic and acidic residues predominate over residues Lys38 to Leu58.

This sequence belongs to the Multicopy lipoprotein (Mlp) family.

The protein localises to the cell outer membrane. An outer membrane protein that may participate in pathogenesis. Some human Lyme disease patients have antibodies against this protein. The Mlp proteins probably undergo intragenic recombination, generating new alleles. The polypeptide is Lipoprotein MlpA (mlpA) (Borreliella burgdorferi (strain ATCC 35210 / DSM 4680 / CIP 102532 / B31) (Borrelia burgdorferi)).